We begin with the raw amino-acid sequence, 437 residues long: 3-phosphoshikimate 1-carboxyvinyltransferase (437 aa).

The 3-phosphoshikimate site is built by lysine 22, serine 23, and arginine 27. Residue lysine 22 coordinates phosphoenolpyruvate. Glycine 96 and arginine 125 together coordinate phosphoenolpyruvate. The 3-phosphoshikimate site is built by serine 170, glutamine 172, aspartate 323, and lysine 350. Residue glutamine 172 participates in phosphoenolpyruvate binding. Aspartate 323 (proton acceptor) is an active-site residue. Phosphoenolpyruvate-binding residues include arginine 354 and arginine 396.

It belongs to the EPSP synthase family. Monomer.

The protein resides in the cytoplasm. It carries out the reaction 3-phosphoshikimate + phosphoenolpyruvate = 5-O-(1-carboxyvinyl)-3-phosphoshikimate + phosphate. It participates in metabolic intermediate biosynthesis; chorismate biosynthesis; chorismate from D-erythrose 4-phosphate and phosphoenolpyruvate: step 6/7. In terms of biological role, catalyzes the transfer of the enolpyruvyl moiety of phosphoenolpyruvate (PEP) to the 5-hydroxyl of shikimate-3-phosphate (S3P) to produce enolpyruvyl shikimate-3-phosphate and inorganic phosphate. This is 3-phosphoshikimate 1-carboxyvinyltransferase from Synechococcus sp. (strain RCC307).